We begin with the raw amino-acid sequence, 504 residues long: uncharacterized protein (504 aa).

The segment at 431 to 483 (GEAEKYRKLQDGDEDEEGTGKPEPKKARRKGFGGKFAPKHEEKVTRAVGVNSE) is disordered.

It belongs to the CBF/MAK21 family.

This is an uncharacterized protein from Caenorhabditis elegans.